The sequence spans 176 residues: RNA pyrophosphohydrolase (176 aa).

Positions 6–149 (GYRPNVGIVI…KRDVYRRVMK (144 aa)) constitute a Nudix hydrolase domain. Positions 38-59 (GGINPGESAEQAMYRELFEEVG) match the Nudix box motif.

The protein belongs to the Nudix hydrolase family. RppH subfamily. Requires a divalent metal cation as cofactor.

Functionally, accelerates the degradation of transcripts by removing pyrophosphate from the 5'-end of triphosphorylated RNA, leading to a more labile monophosphorylated state that can stimulate subsequent ribonuclease cleavage. The chain is RNA pyrophosphohydrolase from Shigella dysenteriae serotype 1 (strain Sd197).